An 875-amino-acid polypeptide reads, in one-letter code: Probable inorganic carbon transporter subunit DabA (875 aa).

Residues cysteine 380, aspartate 382, histidine 563, and cysteine 578 each coordinate Zn(2+).

The protein belongs to the inorganic carbon transporter (TC 9.A.2) DabA family. As to quaternary structure, forms a complex with DabB. Zn(2+) serves as cofactor.

It localises to the cell membrane. In terms of biological role, part of an energy-coupled inorganic carbon pump. In Geobacillus thermodenitrificans (strain NG80-2), this protein is Probable inorganic carbon transporter subunit DabA.